The primary structure comprises 289 residues: LysM and putative peptidoglycan-binding domain-containing protein 4 (289 aa).

The segment at 1-23 (MRLREGPTHSFQPPSSVHSSLGS) is disordered. Over 1–208 (MRLREGPTHS…PASGADWGIR (208 aa)) the chain is Extracellular. A compositionally biased stretch (polar residues) spans 9–23 (HSFQPPSSVHSSLGS). Residues asparagine 30 and asparagine 59 are each glycosylated (N-linked (GlcNAc...) asparagine). In terms of domain architecture, LysM spans 71-115 (LERAITEDDNLNKLALQYGCKVSDIKRVNNLITDQDIYALKTIKI). N-linked (GlcNAc...) asparagine glycans are attached at residues asparagine 134 and asparagine 178. Residues 209-229 (WWNAVFIMLLVGIVLPVFYIV) traverse the membrane as a helical segment. The Cytoplasmic portion of the chain corresponds to 230–289 (YFKTQGDSEGTFSIEGRTNVSTSLSPHTNTGHSMEQMTQRTSGFSPGLLQDTHKLLNPGG). A disordered region spans residues 252–272 (SLSPHTNTGHSMEQMTQRTSG).

It localises to the membrane. The protein is LysM and putative peptidoglycan-binding domain-containing protein 4 (lysmd4) of Xenopus laevis (African clawed frog).